The sequence spans 71 residues: Small ribosomal subunit protein bS21 (71 aa).

A compositionally biased stretch (basic residues) spans 50 to 59; that stretch reads AAAVKRHAKK. The disordered stretch occupies residues 50–71; that stretch reads AAAVKRHAKKVQREQRRAVRLY. Positions 60–71 are enriched in basic and acidic residues; that stretch reads VQREQRRAVRLY.

The protein belongs to the bacterial ribosomal protein bS21 family.

The sequence is that of Small ribosomal subunit protein bS21 from Pseudomonas entomophila (strain L48).